A 185-amino-acid chain; its full sequence is MKKNKLSIKTIVAIGIGSAVFMILGRFGSLPTGIPNTNIETAYAFLSLMALLYGPLAGFLIGFIGHALKDIVFFGSPWISWVFASGIVGLIIGFGARFIKINQGVFKLKQIFMFNLIQIIANGVAWFLVAPTLDILIYSEPLNKVYLQGVIGGISNMITVGVLGTVLISNYSKTRIKKGSLRKEY.

Transmembrane regions (helical) follow at residues 11 to 31 (IVAIGIGSAVFMILGRFGSLP), 44 to 64 (AFLSLMALLYGPLAGFLIGFI), 71 to 91 (IVFFGSPWISWVFASGIVGLI), 111 to 131 (IFMFNLIQIIANGVAWFLVAP), and 149 to 169 (GVIGGISNMITVGVLGTVLIS).

Belongs to the UPF0397 family.

It is found in the cell membrane. The chain is UPF0397 protein CPR_1556 from Clostridium perfringens (strain SM101 / Type A).